Consider the following 93-residue polypeptide: Protamine-3 (93 aa).

The interval 1–93 (MGSRCAKLGT…QSPEPKQTRS (93 aa)) is disordered. Acidic residues predominate over residues 37 to 57 (EGEEEEEGEEEEEEEGEEEEL). Polar residues predominate over residues 81–93 (EVQQSPEPKQTRS). S85 carries the phosphoserine modification.

It belongs to the protamine P3 family.

The protein resides in the nucleus. Its subcellular location is the chromosome. In terms of biological role, protamines substitute for histones in the chromatin of sperm during the haploid phase of spermatogenesis. They compact sperm DNA into a highly condensed, stable and inactive complex. This Bos taurus (Bovine) protein is Protamine-3 (PRM3).